The primary structure comprises 138 residues: MSSAHNAYNAGIMQKTGKAFADEFFAEENQVVHESNAVVLVLMKSDEIDAIIEDIVLKGGKAKNPSIVVEDKAGFWWIKADGAIEIDAAEAGELLGKPFSVYDLLINVSSTVGRAYTLGTKFTITSELMGLDRALTDI.

It belongs to the TmoD/XamoD family. As to quaternary structure, the soluble methane monooxygenase (sMMO) consists of four components A/MMOH (composed of alpha/MmoX, beta/MmoY and gamma/MmoZ), B/MMOB (MmoB), C/MMOR (MmoC) and D/MMOD (MmoD).

Functionally, the B protein acts as a regulator of electron flow through the soluble mmo complex, switching the enzyme from an oxidase to a hydroxylase in the presence of the substrate. The protein is Methane monooxygenase regulatory protein B (mmoB) of Methylosinus trichosporium.